The primary structure comprises 117 residues: Appetite-regulating hormone (117 aa).

The signal sequence occupies residues 1–23 (MPSPGTVCSLLLLGMLWLDLAMA). Serine 26 carries the O-decanoyl serine; alternate lipid modification. Residue serine 26 is the site of O-hexanoyl serine; alternate attachment. The O-octanoyl serine; alternate moiety is linked to residue serine 26. Positions 29–67 (SPEHQRAQQRKESKKPPAKLQPRALGGWLRPEDGDQAEG) are disordered. The span at 31–43 (EHQRAQQRKESKK) shows a compositional bias: basic and acidic residues. Positions 52 to 75 (ALGGWLRPEDGDQAEGAEDELEIQ) are cleaved as a propeptide — removed in mature form. Leucine 98 is modified (leucine amide). Positions 99–117 (GKFLQDILWEEAKEAPADK) are cleaved as a propeptide — removed in mature form.

This sequence belongs to the motilin family. Post-translationally, O-octanoylated by GOAT/MBOAT4. O-octanoylation is essential for ghrelin activity. Amidation of Leu-98 is essential for obestatin activity.

The protein localises to the secreted. Ghrelin is the ligand for growth hormone secretagogue receptor type 1 (GHSR). Induces the release of growth hormone from the pituitary. Has an appetite-stimulating effect, induces adiposity and stimulates gastric acid secretion. Involved in growth regulation. Its function is as follows. Obestatin may be the ligand for GPR39. May have an appetite-reducing effect resulting in decreased food intake. May reduce gastric emptying activity and jejunal motility. This Papio hamadryas (Hamadryas baboon) protein is Appetite-regulating hormone (GHRL).